The primary structure comprises 147 residues: Male-specific protein scotti (147 aa).

The disordered stretch occupies residues 57–76 (EPPLGVFPAQGGPNGPPRLR). N128 carries N-linked (GlcNAc...) asparagine glycosylation.

It belongs to the male-specific scotti family.

In terms of biological role, post-meiotically transcribed gene that has a role in late spermiogenesis; required for actin cone progression during spermatid individualization. This is Male-specific protein scotti from Drosophila simulans (Fruit fly).